The primary structure comprises 347 residues: 3-isopropylmalate dehydrogenase (347 aa).

76–87 (GPKWTDPNNRPE) is a binding site for NAD(+). Residues arginine 94, arginine 104, arginine 132, and aspartate 217 each contribute to the substrate site. Positions 217, 241, and 245 each coordinate Mg(2+). 275–287 (GSAPDIANEDKAN) contacts NAD(+).

Belongs to the isocitrate and isopropylmalate dehydrogenases family. LeuB type 1 subfamily. In terms of assembly, homodimer. The cofactor is Mg(2+). It depends on Mn(2+) as a cofactor.

The protein localises to the cytoplasm. The catalysed reaction is (2R,3S)-3-isopropylmalate + NAD(+) = 4-methyl-2-oxopentanoate + CO2 + NADH. It participates in amino-acid biosynthesis; L-leucine biosynthesis; L-leucine from 3-methyl-2-oxobutanoate: step 3/4. In terms of biological role, catalyzes the oxidation of 3-carboxy-2-hydroxy-4-methylpentanoate (3-isopropylmalate) to 3-carboxy-4-methyl-2-oxopentanoate. The product decarboxylates to 4-methyl-2 oxopentanoate. The protein is 3-isopropylmalate dehydrogenase of Staphylococcus epidermidis (strain ATCC 35984 / DSM 28319 / BCRC 17069 / CCUG 31568 / BM 3577 / RP62A).